The chain runs to 266 residues: GATA zinc finger domain-containing protein 1 (266 aa).

Residues 9–33 (CSMCKTTSSSMWKKSPQGEILCHHC) form a GATA-type zinc finger. Low complexity predominate over residues 59–72 (TTTFATTSAGPSQS). The interval 59-112 (TTTFATTSAGPSQSNGGGGGKQSKQEIHRRSARLRNTKYKSAPAAEKKVSTKGK) is disordered. A Glycyl lysine isopeptide (Lys-Gly) (interchain with G-Cter in SUMO2) cross-link involves residue K259.

In terms of assembly, component of a chromatin complex, at least composed of KDM5A, GATAD1 and EMSY. Expressed in the eye (lens, ciliary body, retina, sclera and conjunctiva) at postnatal day 2 and 10. Not detected anywhere at postnatal day 14.

It is found in the nucleus. Component of some chromatin complex recruited to chromatin sites methylated 'Lys-4' of histone H3 (H3K4me), with a preference for trimethylated form (H3K4me3). The chain is GATA zinc finger domain-containing protein 1 (Gatad1) from Mus musculus (Mouse).